Reading from the N-terminus, the 363-residue chain is MRVSDFNFDLPDELIARYPKTDRVSCRLLQLNGENGEIFHRTFSDVLDLIDEGDLLIFNNTRVIPARMFGRKASGGKIEVLVERMLDEHRFLAHIRSSKSPKEGAELFLGEDKLGENNGIKAVMKARHSSLFEVELSDKSTALLDVLQTIGHMPLPPYIDRPDEEADKECYQTVYSKVPGAVAAPTAGLHFDENLLEKLKAKGVNFEFVTLHVGAGTFQPVRVENIEDHVMHAEYVEVSQEVCNAIIATKKAGKRVIAVGTTSVRSIESAALSAEEFGNPDLIEPYFSDTSIFIYPGKKFRVVDCLITNFHLPESTLIMLVSAFAGYKNTMNAYKHAVQEKYRFFSYGDAMFINKNSNVRGLE.

It belongs to the QueA family. Monomer.

The protein localises to the cytoplasm. It catalyses the reaction 7-aminomethyl-7-carbaguanosine(34) in tRNA + S-adenosyl-L-methionine = epoxyqueuosine(34) in tRNA + adenine + L-methionine + 2 H(+). It participates in tRNA modification; tRNA-queuosine biosynthesis. Its function is as follows. Transfers and isomerizes the ribose moiety from AdoMet to the 7-aminomethyl group of 7-deazaguanine (preQ1-tRNA) to give epoxyqueuosine (oQ-tRNA). This Haemophilus influenzae (strain PittGG) protein is S-adenosylmethionine:tRNA ribosyltransferase-isomerase.